Consider the following 64-residue polypeptide: Small ribosomal subunit protein eS17 (64 aa).

The protein belongs to the eukaryotic ribosomal protein eS17 family.

The chain is Small ribosomal subunit protein eS17 from Natronomonas pharaonis (strain ATCC 35678 / DSM 2160 / CIP 103997 / JCM 8858 / NBRC 14720 / NCIMB 2260 / Gabara) (Halobacterium pharaonis).